The chain runs to 686 residues: Protein MxiA (686 aa).

A run of 6 helical transmembrane segments spans residues 28–52, 105–129, 197–216, 232–256, 274–292, and 299–315; these read LIIP…ILVF, FVIG…FIVI, AIAG…SVGM, ILTI…GFIV, IFGN…LAIG, and FFVF…LFYY.

Belongs to the FHIPEP (flagella/HR/invasion proteins export pore) family.

The protein resides in the cell inner membrane. Necessary for the secretion of IPA invasins. The protein is Protein MxiA (mxiA) of Shigella flexneri.